Consider the following 73-residue polypeptide: Translation initiation factor IF-1 (73 aa).

Positions Met-1–Arg-73 constitute an S1-like domain.

This sequence belongs to the IF-1 family. In terms of assembly, component of the 30S ribosomal translation pre-initiation complex which assembles on the 30S ribosome in the order IF-2 and IF-3, IF-1 and N-formylmethionyl-tRNA(fMet); mRNA recruitment can occur at any time during PIC assembly.

Its subcellular location is the cytoplasm. One of the essential components for the initiation of protein synthesis. Stabilizes the binding of IF-2 and IF-3 on the 30S subunit to which N-formylmethionyl-tRNA(fMet) subsequently binds. Helps modulate mRNA selection, yielding the 30S pre-initiation complex (PIC). Upon addition of the 50S ribosomal subunit IF-1, IF-2 and IF-3 are released leaving the mature 70S translation initiation complex. The chain is Translation initiation factor IF-1 from Acinetobacter baumannii (strain ATCC 17978 / DSM 105126 / CIP 53.77 / LMG 1025 / NCDC KC755 / 5377).